Reading from the N-terminus, the 87-residue chain is Omega-lycotoxin-Am1c (87 aa).

An N-terminal signal peptide occupies residues 1–17; the sequence is MKLSIFFVLFFIAIAYC. Residues 18–40 constitute a propeptide that is removed on maturation; the sequence is QPEFLDDEEDEVEETLPVAEEGR. 4 cysteine pairs are disulfide-bonded: C44–C59, C51–C64, C58–C84, and C66–C82.

It belongs to the neurotoxin omega-lctx family. Expressed by the venom gland.

It is found in the secreted. Modulates Cav2.1/CACNA1A voltage-gated calcium channels (P/Q-type currents) in rat cerebellar Purkinje cells and hippocampal CA1-CA3 neurons. At saturating concentrations (&gt;10 nM) decelerates activation kinetics and slightly increases peak amplitude without affecting deactivation kinetics. In vivo, does not cause death when intravenously injected into mice. In rat models, through its activity on Cav2.1/CACNA1A, has an ameliorative effect on memory defects provoked by hyperstimulation of N-methyl-D-aspartate receptors (NMDARs) in the hippocampus. In Alopecosa marikovskyi (Wolf spider), this protein is Omega-lycotoxin-Am1c.